We begin with the raw amino-acid sequence, 89 residues long: Protein PerC (89 aa).

Transcriptional activator of eaeA/bfpA expression in enteropathogenic E.coli. In Escherichia coli O111:H-, this protein is Protein PerC (perC).